Reading from the N-terminus, the 103-residue chain is Large ribosomal subunit protein uL24 (103 aa).

Belongs to the universal ribosomal protein uL24 family. In terms of assembly, part of the 50S ribosomal subunit.

One of two assembly initiator proteins, it binds directly to the 5'-end of the 23S rRNA, where it nucleates assembly of the 50S subunit. In terms of biological role, one of the proteins that surrounds the polypeptide exit tunnel on the outside of the subunit. The chain is Large ribosomal subunit protein uL24 from Bacillus cytotoxicus (strain DSM 22905 / CIP 110041 / 391-98 / NVH 391-98).